The chain runs to 113 residues: Protein translation factor SUI1 homolog 2 (113 aa).

The residue at position 2 (Ser-2) is an N-acetylserine.

Belongs to the SUI1 family.

Its function is as follows. Probably involved in translation. This is Protein translation factor SUI1 homolog 2 from Arabidopsis thaliana (Mouse-ear cress).